Consider the following 445-residue polypeptide: Na(+)-translocating NADH-quinone reductase subunit A (445 aa).

Belongs to the NqrA family. Composed of six subunits; NqrA, NqrB, NqrC, NqrD, NqrE and NqrF.

It catalyses the reaction a ubiquinone + n Na(+)(in) + NADH + H(+) = a ubiquinol + n Na(+)(out) + NAD(+). In terms of biological role, NQR complex catalyzes the reduction of ubiquinone-1 to ubiquinol by two successive reactions, coupled with the transport of Na(+) ions from the cytoplasm to the periplasm. NqrA to NqrE are probably involved in the second step, the conversion of ubisemiquinone to ubiquinol. The chain is Na(+)-translocating NADH-quinone reductase subunit A from Pseudomonas aeruginosa (strain UCBPP-PA14).